A 1088-amino-acid chain; its full sequence is DNA damage-binding protein 1a (1088 aa).

The protein belongs to the DDB1 family. In terms of assembly, component of the CDD complex, at least composed of COP10, DET1 and DDB1A. Component of the CUL4-RBX1-CDD complex. Component of the CUL4-RBX1-DDB1-PRL1 E3 ubiquitin-protein ligase complex. Component of the UV-DDB complex, which is composed of DDB1A and DDB2. Interacts with RAE1. Interacts with WDR55. Interacts with ATCSA-1. Interacts with DDA1. Binds to ASG2; the subcellular localization of this complex depends on ASG2 farnesylation status. Binds to KTN80.2/DWA3. Interacts with HTD1. Interacts directly with DHU1.

It localises to the cytoplasm. It is found in the nucleus. It participates in protein modification; protein ubiquitination. In terms of biological role, component of light signal transduction machinery. Involved in repression of photomorphogenesis in darkness by participating in the CDD complex, a complex probably required to regulate the activity of ubiquitin conjugating enzymes (E2s). Repression of photomorphogenesis is probably mediated by ubiquitination and subsequent degradation of photomorphogenesis-promoting factors such as HY5, HYH and LAF1. Plays a role in DNA repair by forming with DDB2 the UV-damaged DNA-binding protein complex (UV-DDB). Component of the CUL4-RBX1-DDB1-PRL1 E3 ubiquitin-protein ligase complex. The protein is DNA damage-binding protein 1a of Arabidopsis thaliana (Mouse-ear cress).